A 129-amino-acid chain; its full sequence is Small ribosomal subunit protein uS11 (129 aa).

This sequence belongs to the universal ribosomal protein uS11 family. As to quaternary structure, part of the 30S ribosomal subunit. Interacts with proteins S7 and S18. Binds to IF-3.

Located on the platform of the 30S subunit, it bridges several disparate RNA helices of the 16S rRNA. Forms part of the Shine-Dalgarno cleft in the 70S ribosome. The polypeptide is Small ribosomal subunit protein uS11 (Maridesulfovibrio salexigens (strain ATCC 14822 / DSM 2638 / NCIMB 8403 / VKM B-1763) (Desulfovibrio salexigens)).